The sequence spans 104 residues: Toxin-like protein 14 (104 aa).

The signal sequence occupies residues 1–25 (MNTYNARLYIFSLALALVILKGTKC).

Post-translationally, contains 4 disulfide bonds. Expressed by the venom gland.

The protein resides in the secreted. In Urodacus yaschenkoi (Inland robust scorpion), this protein is Toxin-like protein 14.